Consider the following 199-residue polypeptide: 7-methyl-GTP pyrophosphatase (199 aa).

Residue D73 is the Proton acceptor of the active site.

Belongs to the Maf family. YceF subfamily. It depends on a divalent metal cation as a cofactor.

It is found in the cytoplasm. The catalysed reaction is N(7)-methyl-GTP + H2O = N(7)-methyl-GMP + diphosphate + H(+). Its function is as follows. Nucleoside triphosphate pyrophosphatase that hydrolyzes 7-methyl-GTP (m(7)GTP). May have a dual role in cell division arrest and in preventing the incorporation of modified nucleotides into cellular nucleic acids. The polypeptide is 7-methyl-GTP pyrophosphatase (Bordetella pertussis (strain Tohama I / ATCC BAA-589 / NCTC 13251)).